Here is a 104-residue protein sequence, read N- to C-terminus: MAMIKAQELVSSNSVVVFSKTFCPYCTSVKQLLNQLGAQFKVIELDSESDGSDLQNALAEWTGQRTVPNVFIGGKHIGGCDKTTGMHQEGKLIPLLTEAGAVKA.

A Glutaredoxin domain is found at 3–103 (MIKAQELVSS…PLLTEAGAVK (101 aa)). A disulfide bridge links Cys23 with Cys26.

It belongs to the glutaredoxin family. CPYC subfamily.

It is found in the cytoplasm. In terms of biological role, has a glutathione-disulfide oxidoreductase activity in the presence of NADPH and glutathione reductase. Reduces low molecular weight disulfides and proteins. This Vernicia fordii (Tung) protein is Glutaredoxin.